Consider the following 500-residue polypeptide: Aldehyde dehydrogenase, mitochondrial (500 aa).

Lys35, Lys56, Lys61, and Lys142 each carry N6-acetyllysine. 245 to 250 (GSTEVG) provides a ligand contact to NAD(+). The active-site Proton acceptor is the Glu268. Cys302 functions as the Nucleophile in the catalytic mechanism. Residues Lys351, Lys358, Lys366, Lys390, Lys409, Lys411, Lys424, and Lys434 each carry the N6-acetyllysine modification.

Belongs to the aldehyde dehydrogenase family. Homotetramer. In response to mitochondrial stress, the precursor protein is ubiquitinated by the SIFI complex in the cytoplasm before mitochondrial import, leading to its degradation. Within the SIFI complex, UBR4 initiates ubiquitin chain that are further elongated or branched by KCMF1.

Its subcellular location is the mitochondrion matrix. The enzyme catalyses an aldehyde + NAD(+) + H2O = a carboxylate + NADH + 2 H(+). It functions in the pathway alcohol metabolism; ethanol degradation; acetate from ethanol: step 2/2. In terms of biological role, required for clearance of cellular formaldehyde, a cytotoxic and carcinogenic metabolite that induces DNA damage. This Mesocricetus auratus (Golden hamster) protein is Aldehyde dehydrogenase, mitochondrial (ALDH2).